A 760-amino-acid polypeptide reads, in one-letter code: ATP-dependent DNA helicase Hel308 (760 aa).

Residues glutamine 28 and 46–53 contribute to the ATP site; that span reads IPTASGKT. The Helicase ATP-binding domain maps to 33–199; that stretch reads EMGLLEKKNL…WLGAALVLSE (167 aa). A DEAH box motif is present at residues 144–147; sequence DEIH. The 195-residue stretch at 232–426 folds into the Helicase C-terminal domain; that stretch reads AVNLVLDTIK…SKLGTENALR (195 aa).

The protein belongs to the helicase family. Hel308 subfamily. Monomer.

It carries out the reaction Couples ATP hydrolysis with the unwinding of duplex DNA by translocating in the 3'-5' direction.. The enzyme catalyses ATP + H2O = ADP + phosphate + H(+). DNA-dependent ATPase and 3'-5' DNA helicase that may be involved in repair of stalled replication forks. This chain is ATP-dependent DNA helicase Hel308, found in Methanococcoides burtonii (strain DSM 6242 / NBRC 107633 / OCM 468 / ACE-M).